We begin with the raw amino-acid sequence, 137 residues long: Phosphoribosyl-AMP cyclohydrolase (137 aa).

Asp84 lines the Mg(2+) pocket. Cys85 provides a ligand contact to Zn(2+). Residues Asp86 and Asp88 each coordinate Mg(2+). Zn(2+) is bound by residues Cys101 and Cys108.

Belongs to the PRA-CH family. Homodimer. It depends on Mg(2+) as a cofactor. Zn(2+) is required as a cofactor.

It is found in the cytoplasm. The enzyme catalyses 1-(5-phospho-beta-D-ribosyl)-5'-AMP + H2O = 1-(5-phospho-beta-D-ribosyl)-5-[(5-phospho-beta-D-ribosylamino)methylideneamino]imidazole-4-carboxamide. It participates in amino-acid biosynthesis; L-histidine biosynthesis; L-histidine from 5-phospho-alpha-D-ribose 1-diphosphate: step 3/9. Its function is as follows. Catalyzes the hydrolysis of the adenine ring of phosphoribosyl-AMP. The sequence is that of Phosphoribosyl-AMP cyclohydrolase from Pelodictyon phaeoclathratiforme (strain DSM 5477 / BU-1).